Reading from the N-terminus, the 441-residue chain is MEPRDNQAEASYTFGDRSSSDIVVRLRNEEGRDDWIYCHSKILSEKSQYFADRLSDKWPTCKILDSRYCVEVICQESDYDHHINLLRLLYVVSDDVHEDNLCHNVKSALGILSVAKELSCPQIVTACVNYLEAVPWEEGEEEEILRIVPRIGSEAEPILARLQPVDQSAVLEIFVSAFRFATSSPPLLLGDIKSSAQEQIEYMITEDDDAPLLIADEEVKLEVKQCVKSLFVRFFQCLEEITLKPVESEVINKKGSFRMVLSDMCWVFQILTKMEVVRDFVITWADISEKLVKVVEQLETTVVEAVEIRVKVIEVTAKVIEAIGYGTVILPTAKRLQMVKLWLPFVRNTKPLVDSPVREDEENDTVRYKIDGEIWQALESSFVSIILALPSADQAEILTEWLSKNGLYPDLTEAFEVWCYRSKVAKRRLGLVGGEEENGMS.

One can recognise a BTB domain in the interval 20–98; the sequence is SDIVVRLRNE…LYVVSDDVHE (79 aa).

It participates in protein modification; protein ubiquitination. In terms of biological role, may act as a substrate-specific adapter of an E3 ubiquitin-protein ligase complex (CUL3-RBX1-BTB) which mediates the ubiquitination and subsequent proteasomal degradation of target proteins. This Arabidopsis thaliana (Mouse-ear cress) protein is BTB/POZ domain-containing protein At3g05675.